We begin with the raw amino-acid sequence, 468 residues long: Serine/threonine-protein kinase ULK3 (468 aa).

Residues 13 to 269 (FILTEKLGSG…FIEFFAHLFV (257 aa)) form the Protein kinase domain. Residues 19–27 (LGSGSYATV) and Lys-43 each bind ATP. Asp-136 (proton acceptor) is an active-site residue. MIT domains are found at residues 279–347 (TLEK…KVLV) and 374–442 (RLFS…KEQM).

It belongs to the protein kinase superfamily. Ser/Thr protein kinase family. APG1/unc-51/ULK1 subfamily.

It localises to the cytoplasm. It catalyses the reaction L-seryl-[protein] + ATP = O-phospho-L-seryl-[protein] + ADP + H(+). It carries out the reaction L-threonyl-[protein] + ATP = O-phospho-L-threonyl-[protein] + ADP + H(+). Its function is as follows. Serine/threonine protein kinase that acts as a regulator of Sonic hedgehog (SHH) signaling and autophagy. The chain is Serine/threonine-protein kinase ULK3 (ulk3) from Xenopus laevis (African clawed frog).